Consider the following 306-residue polypeptide: Glutaminase (306 aa).

Substrate is bound by residues Ser61, Asn111, Glu155, Asn162, Tyr186, Tyr238, and Val256.

Belongs to the glutaminase family. In terms of assembly, homotetramer.

The enzyme catalyses L-glutamine + H2O = L-glutamate + NH4(+). This Pseudomonas entomophila (strain L48) protein is Glutaminase.